The sequence spans 603 residues: Protein US26 (603 aa).

Residues 496–513 (EEEDQEEDDTSDDDDQEK) show a composition bias toward acidic residues. 2 disordered regions span residues 496–536 (EEED…GSLE) and 549–568 (AVAE…DTAQ). Positions 517-533 (NPQNNIGSLTRTPSSPG) are enriched in polar residues.

The protein belongs to the herpesviridae US22 family.

In Human cytomegalovirus (strain Merlin) (HHV-5), this protein is Protein US26 (US26).